The primary structure comprises 1755 residues: E3 ubiquitin-protein ligase UBR2 (1755 aa).

The residue at position 2 (A2) is an N-acetylalanine. A Glycyl lysine isopeptide (Lys-Gly) (interchain with G-Cter in ubiquitin) cross-link involves residue K94. A UBR-type zinc finger spans residues 97–168 (HLCGRVFKVG…EGPYCQKHKL (72 aa)). Zn(2+) contacts are provided by C99, C112, C115, C124, C127, H133, and H136. F148 contributes to the a peptide binding site. Residue C149 participates in Zn(2+) binding. D150 contributes to the a peptide binding site. C151 contributes to the Zn(2+) binding site. A peptide is bound at residue D153. A Glycyl lysine isopeptide (Lys-Gly) (interchain with G-Cter in ubiquitin) cross-link involves residue K158. Residue C163 participates in Zn(2+) binding. K165 participates in a covalent cross-link: Glycyl lysine isopeptide (Lys-Gly) (interchain with G-Cter in ubiquitin). H166 provides a ligand contact to Zn(2+). Glycyl lysine isopeptide (Lys-Gly) (interchain with G-Cter in ubiquitin) cross-links involve residues K248, K255, and K470. S476 is modified (phosphoserine). Glycyl lysine isopeptide (Lys-Gly) (interchain with G-Cter in ubiquitin) cross-links involve residues K488, K568, K779, and K789. A disordered region spans residues 1012-1033 (AEAEGTIMEESSRDKDKAERKR). The stretch at 1019 to 1054 (MEESSRDKDKAERKRKAEIARLRREKIMAQMSEMQR) forms a coiled coil. The segment covering 1021 to 1033 (ESSRDKDKAERKR) has biased composition (basic and acidic residues). Residues C1108, C1111, C1168, H1170, H1173, C1176, C1210, and C1213 each coordinate Zn(2+). An RING-type; atypical zinc finger spans residues 1108–1214 (CILCQEEQEV…NGEFLCPLCE (107 aa)). Glycyl lysine isopeptide (Lys-Gly) (interchain with G-Cter in ubiquitin) cross-links involve residues K1496, K1599, and K1689. The residue at position 1694 (S1694) is a Phosphoserine. The residue at position 1697 (Y1697) is a Phosphotyrosine.

This sequence belongs to the E3 ubiquitin-protein ligase UBR1-like family. As to quaternary structure, interacts with UBE2B; promotes the UBE2B-H2A interaction and the ubiquitination of histone H2A by UBE2B and UBR2. Interacts with RECQL4. Interacts with Tex19.1 and Tex19.2; does not lead to Tex19.1 degradation and stabilizes it. Interacts with L1RE1. Interacts with CASP8. Interacts with ATXN3. Interacts with UBE2O. In terms of processing, dephosphorylated by DUSP22 at Ser-1694 and Tyr-1697, leading to subsequent ubiquitination and proteasomal degradation. Post-translationally, 'Lys-48'-linked ubiquitinated at Lys-94, Lys-779 and Lys-1599 following DUSP22-mediated dephosphorylation of Ser-1694 and Tyr-1697 which promotes UBR2 interaction with the SCF(FBW1A) E3 ubiquitin-protein ligase complex. Highly expressed in skeletal muscle. Also expressed in heart, kidney and testis. Expressed in acinar cells of the pancreas. In testes, expressed primarily in spermatocytes. Expressed in cerebellum.

The protein localises to the nucleus. The protein resides in the chromosome. It catalyses the reaction S-ubiquitinyl-[E2 ubiquitin-conjugating enzyme]-L-cysteine + [acceptor protein]-L-lysine = [E2 ubiquitin-conjugating enzyme]-L-cysteine + N(6)-ubiquitinyl-[acceptor protein]-L-lysine.. It participates in protein modification; protein ubiquitination. In terms of biological role, E3 ubiquitin-protein ligase which is a component of the N-end rule pathway. Recognizes and binds to proteins bearing specific N-terminal residues (N-degrons) that are destabilizing according to the N-end rule, leading to their ubiquitination and subsequent degradation. Recognizes both type-1 and type-2 N-degrons, containing positively charged amino acids (Arg, Lys and His) and bulky and hydrophobic amino acids, respectively. Does not ubiquitinate proteins that are acetylated at the N-terminus. In contrast, it strongly binds methylated N-degrons. Plays a critical role in chromatin inactivation and chromosome-wide transcriptional silencing during meiosis via ubiquitination of histone H2A. Binds leucine and is a negative regulator of the leucine-mTOR signaling pathway, thereby controlling cell growth. Required for spermatogenesis, promotes, with Tex19.1, SPO11-dependent recombination foci to accumulate and drive robust homologous chromosome synapsis. Polyubiquitinates LINE-1 retrotransposon encoded, LIRE1, which induces degradation, inhibiting LINE-1 retrotransposon mobilization. Catalyzes ubiquitination and degradation of the N-terminal part of NLRP1B following NLRP1B activation by pathogens and other damage-associated signals: ubiquitination promotes degradation of the N-terminal part and subsequent release of the cleaved C-terminal part of NLRP1B, which polymerizes and forms the NLRP1B inflammasome followed by host cell pyroptosis. Plays a role in T-cell receptor signaling by inducing 'Lys-63'-linked ubiquitination of lymphocyte cell-specific kinase LCK. This activity is regulated by DUSP22, which induces 'Lys-48'-linked ubiquitination of UBR2, leading to its proteasomal degradation by SCF E3 ubiquitin-protein ligase complex. This chain is E3 ubiquitin-protein ligase UBR2, found in Mus musculus (Mouse).